The primary structure comprises 432 residues: Transcriptional adapter 3 (432 aa).

Residues 40 to 69 (IEELDTLQLELETLLSSASRRLRVLEAETQ) adopt a coiled-coil conformation. Disordered stretches follow at residues 88–127 (KEHE…RNMQ) and 275–313 (SPVE…HTKS). The segment covering 293–305 (DGASTSPRSQNKP) has biased composition (polar residues). Residues 367 to 407 (LLRLAKEEMNRQELRQRVRMADNEVMDAFRKIMAARQKKRT) adopt a coiled-coil conformation.

The protein belongs to the NGG1 family.

It is found in the nucleus. Its function is as follows. Functions as a component of the PCAF complex. The PCAF complex is capable of efficiently acetylating histones in a nucleosomal context. This chain is Transcriptional adapter 3 (tada3), found in Xenopus tropicalis (Western clawed frog).